Reading from the N-terminus, the 237-residue chain is tRNA (guanine-N(7)-)-methyltransferase (237 aa).

Positions 65, 90, 117, and 140 each coordinate S-adenosyl-L-methionine. The active site involves D140. Substrate is bound by residues K144, D176, and 212–215; that span reads TKFE. The segment at 197–217 is disordered; that stretch reads TCGPRQFSPRGERPETKFERR. Residues 206–217 are compositionally biased toward basic and acidic residues; it reads RGERPETKFERR.

This sequence belongs to the class I-like SAM-binding methyltransferase superfamily. TrmB family.

It carries out the reaction guanosine(46) in tRNA + S-adenosyl-L-methionine = N(7)-methylguanosine(46) in tRNA + S-adenosyl-L-homocysteine. The protein operates within tRNA modification; N(7)-methylguanine-tRNA biosynthesis. In terms of biological role, catalyzes the formation of N(7)-methylguanine at position 46 (m7G46) in tRNA. This Alkalilimnicola ehrlichii (strain ATCC BAA-1101 / DSM 17681 / MLHE-1) protein is tRNA (guanine-N(7)-)-methyltransferase.